Here is a 217-residue protein sequence, read N- to C-terminus: Small ribosomal subunit protein uS3 (217 aa).

Residues Ile-40–Arg-110 enclose the KH type-2 domain.

It belongs to the universal ribosomal protein uS3 family. Part of the 30S ribosomal subunit. Forms a tight complex with proteins S10 and S14.

In terms of biological role, binds the lower part of the 30S subunit head. Binds mRNA in the 70S ribosome, positioning it for translation. The polypeptide is Small ribosomal subunit protein uS3 (Rickettsia felis (strain ATCC VR-1525 / URRWXCal2) (Rickettsia azadi)).